We begin with the raw amino-acid sequence, 232 residues long: 2,3-bisphosphoglycerate-dependent phosphoglycerate mutase (232 aa).

Residues 8–15 (RHGESLWN), 21–22 (TG), Arg60, 87–90 (ERHY), Lys98, 114–115 (RR), and 183–184 (GN) contribute to the substrate site. Residue His9 is the Tele-phosphohistidine intermediate of the active site. Glu87 (proton donor/acceptor) is an active-site residue.

Belongs to the phosphoglycerate mutase family. BPG-dependent PGAM subfamily.

The enzyme catalyses (2R)-2-phosphoglycerate = (2R)-3-phosphoglycerate. It participates in carbohydrate degradation; glycolysis; pyruvate from D-glyceraldehyde 3-phosphate: step 3/5. In terms of biological role, catalyzes the interconversion of 2-phosphoglycerate and 3-phosphoglycerate. The polypeptide is 2,3-bisphosphoglycerate-dependent phosphoglycerate mutase (Clostridium beijerinckii (strain ATCC 51743 / NCIMB 8052) (Clostridium acetobutylicum)).